A 160-amino-acid chain; its full sequence is Cyclic pyranopterin monophosphate synthase (160 aa).

Substrate contacts are provided by residues 76-78 and 114-115; these read LCH and ME. Residue Asp-129 is part of the active site.

This sequence belongs to the MoaC family. In terms of assembly, homohexamer; trimer of dimers.

The catalysed reaction is (8S)-3',8-cyclo-7,8-dihydroguanosine 5'-triphosphate = cyclic pyranopterin phosphate + diphosphate. It participates in cofactor biosynthesis; molybdopterin biosynthesis. In terms of biological role, catalyzes the conversion of (8S)-3',8-cyclo-7,8-dihydroguanosine 5'-triphosphate to cyclic pyranopterin monophosphate (cPMP). The sequence is that of Cyclic pyranopterin monophosphate synthase from Saccharophagus degradans (strain 2-40 / ATCC 43961 / DSM 17024).